We begin with the raw amino-acid sequence, 118 residues long: Large ribosomal subunit protein bL20 (118 aa).

It belongs to the bacterial ribosomal protein bL20 family.

Its function is as follows. Binds directly to 23S ribosomal RNA and is necessary for the in vitro assembly process of the 50S ribosomal subunit. It is not involved in the protein synthesizing functions of that subunit. The protein is Large ribosomal subunit protein bL20 of Staphylococcus epidermidis (strain ATCC 35984 / DSM 28319 / BCRC 17069 / CCUG 31568 / BM 3577 / RP62A).